Here is a 463-residue protein sequence, read N- to C-terminus: UDP-N-acetylmuramoylalanine--D-glutamate ligase (463 aa).

126 to 132 lines the ATP pocket; sequence GSNGKST.

This sequence belongs to the MurCDEF family.

It localises to the cytoplasm. The enzyme catalyses UDP-N-acetyl-alpha-D-muramoyl-L-alanine + D-glutamate + ATP = UDP-N-acetyl-alpha-D-muramoyl-L-alanyl-D-glutamate + ADP + phosphate + H(+). The protein operates within cell wall biogenesis; peptidoglycan biosynthesis. In terms of biological role, cell wall formation. Catalyzes the addition of glutamate to the nucleotide precursor UDP-N-acetylmuramoyl-L-alanine (UMA). The protein is UDP-N-acetylmuramoylalanine--D-glutamate ligase of Idiomarina loihiensis (strain ATCC BAA-735 / DSM 15497 / L2-TR).